Here is a 306-residue protein sequence, read N- to C-terminus: 3-methyl-2-oxobutanoate hydroxymethyltransferase (306 aa).

Asp53 and Asp96 together coordinate Mg(2+). 3-methyl-2-oxobutanoate contacts are provided by residues 53–54, Asp96, and Lys126; that span reads DS. Residue Glu128 participates in Mg(2+) binding. The Proton acceptor role is filled by Glu195.

The protein belongs to the PanB family. As to quaternary structure, homodecamer; pentamer of dimers. The cofactor is Mg(2+).

Its subcellular location is the cytoplasm. The enzyme catalyses 3-methyl-2-oxobutanoate + (6R)-5,10-methylene-5,6,7,8-tetrahydrofolate + H2O = 2-dehydropantoate + (6S)-5,6,7,8-tetrahydrofolate. The protein operates within cofactor biosynthesis; (R)-pantothenate biosynthesis; (R)-pantoate from 3-methyl-2-oxobutanoate: step 1/2. Catalyzes the reversible reaction in which hydroxymethyl group from 5,10-methylenetetrahydrofolate is transferred onto alpha-ketoisovalerate to form ketopantoate. The chain is 3-methyl-2-oxobutanoate hydroxymethyltransferase from Anaeromyxobacter dehalogenans (strain 2CP-1 / ATCC BAA-258).